The sequence spans 197 residues: ATP-dependent Clp protease proteolytic subunit 2 (197 aa).

The active-site Nucleophile is the serine 96. Residue histidine 121 is part of the active site.

The protein belongs to the peptidase S14 family. As to quaternary structure, fourteen ClpP subunits assemble into 2 heptameric rings which stack back to back to give a disk-like structure with a central cavity, resembling the structure of eukaryotic proteasomes.

It is found in the cytoplasm. It carries out the reaction Hydrolysis of proteins to small peptides in the presence of ATP and magnesium. alpha-casein is the usual test substrate. In the absence of ATP, only oligopeptides shorter than five residues are hydrolyzed (such as succinyl-Leu-Tyr-|-NHMec, and Leu-Tyr-Leu-|-Tyr-Trp, in which cleavage of the -Tyr-|-Leu- and -Tyr-|-Trp bonds also occurs).. In terms of biological role, cleaves peptides in various proteins in a process that requires ATP hydrolysis. Has a chymotrypsin-like activity. Plays a major role in the degradation of misfolded proteins. The chain is ATP-dependent Clp protease proteolytic subunit 2 from Parasynechococcus marenigrum (strain WH8102).